We begin with the raw amino-acid sequence, 312 residues long: MRMLLALLALSAARPSASAESHWCYEVQAESSNYPCLVPVKWGGNCQKDRQSPINIVTTKAKVDKKLGRFFFSGYDKKQTWTVQNNGHSVMMLLENKASISGGGLPAPYQAKQLHLHWSDLPYKGSEHSLDGEHFAMEMHIVHEKEKGTSRNVKEAQDPEDEIAVLAFLVEAGTQVNEGFQPLVEALSNIPKPEMSTTMAESSLLDLLPKEEKLRHYFRYLGSLTTPTCDEKVVWTVFREPIQLHREQILAFSQKLYYDKEQTVSMKDNVRPLQQLGQRTVIKSGAPGRPLPWALPALLGPMLACLLAGFLR.

A signal peptide spans 1–18; sequence MRMLLALLALSAARPSAS. The 265-residue stretch at 21-285 folds into the Alpha-carbonic anhydrase domain; that stretch reads SHWCYEVQAE…LGQRTVIKSG (265 aa). Disulfide bonds link cysteine 24–cysteine 36 and cysteine 46–cysteine 229. Catalysis depends on histidine 88, which acts as the Proton donor/acceptor. The Zn(2+) site is built by histidine 115, histidine 117, and histidine 140. A substrate-binding site is contributed by 225 to 226; sequence TT. A lipid anchor (GPI-anchor amidated serine) is attached at serine 284. Residues 285–312 constitute a propeptide, removed in mature form; sequence GAPGRPLPWALPALLGPMLACLLAGFLR.

Belongs to the alpha-carbonic anhydrase family. As to quaternary structure, interacts with SLC4A4. Requires Zn(2+) as cofactor. In terms of tissue distribution, expressed in the endothelium of the choriocapillaris in eyes (at protein level). Not expressed in the retinal epithelium at detectable levels.

Its subcellular location is the cell membrane. It catalyses the reaction hydrogencarbonate + H(+) = CO2 + H2O. Its activity is regulated as follows. Activated by histamine, L-adrenaline, D-phenylalanine, L- and D-histidine. Inhibited by coumarins, saccharin, sulfonamide derivatives such as acetazolamide and Foscarnet (phosphonoformate trisodium salt). In terms of biological role, catalyzes the reversible hydration of carbon dioxide into bicarbonate and protons and thus is essential to maintaining intracellular and extracellular pH. May stimulate the sodium/bicarbonate transporter activity of SLC4A4 that acts in pH homeostasis. It is essential for acid overload removal from the retina and retina epithelium, and acid release in the choriocapillaris in the choroid. This chain is Carbonic anhydrase 4, found in Homo sapiens (Human).